The chain runs to 856 residues: Villin-like protein (856 aa).

6 Gelsolin-like repeats span residues 22–74, 146–186, 263–307, 401–450, 521–561, and 624–665; these read RKMV…EAQG, VSAT…SEKA, LVVL…QERK, LHRQ…DEIE, TRTM…DQRE, and LVLA…WKEA. The tract at residues 762–796 is disordered; sequence SQDSSENDLVRSPKSAGSRTSSSVSSTSATINGGL. The segment covering 776–791 has biased composition (low complexity); that stretch reads SAGSRTSSSVSSTSAT. Positions 790 to 856 constitute an HP domain; that stretch reads ATINGGLRRE…RQEKKQLGFF (67 aa).

Belongs to the villin/gelsolin family. In terms of tissue distribution, ubiquitously expressed in 16 tissues examined.

Its function is as follows. Possible tumor suppressor. The polypeptide is Villin-like protein (VILL) (Homo sapiens (Human)).